A 70-amino-acid chain; its full sequence is Protein SlyX homolog (70 aa).

Belongs to the SlyX family.

The protein is Protein SlyX homolog of Shewanella loihica (strain ATCC BAA-1088 / PV-4).